Consider the following 461-residue polypeptide: Ornithine decarboxylase (461 aa).

At K69 the chain carries N6-(pyridoxal phosphate)lysine. Residues S200, G237, and 274-277 (EPGR) contribute to the pyridoxal 5'-phosphate site. S303 bears the Phosphoserine; by CK2 mark. Residue 331–332 (YD) coordinates substrate. C360 serves as the catalytic Proton donor; shared with dimeric partner. S-nitrosocysteine is present on C360. Residue D361 participates in substrate binding. Y389 serves as a coordination point for pyridoxal 5'-phosphate.

This sequence belongs to the Orn/Lys/Arg decarboxylase class-II family. In terms of assembly, homodimer. Only the dimer is catalytically active, as the active sites are constructed of residues from both monomers. Does not form a heterodimer with AZIN2. Pyridoxal 5'-phosphate is required as a cofactor. In terms of tissue distribution, expressed during testis development in the outer part of the seminiferous tubules.

It catalyses the reaction L-ornithine + H(+) = putrescine + CO2. It participates in amine and polyamine biosynthesis; putrescine biosynthesis via L-ornithine pathway; putrescine from L-ornithine: step 1/1. Inhibited by antizymes (AZs) OAZ1, OAZ2 and OAZ3 in response to polyamine levels. AZs inhibit the assembly of the functional homodimer by binding to ODC monomers. Additionally, OAZ1 targets ODC monomers for ubiquitin-independent proteolytic destruction by the 26S proteasome. Its function is as follows. Catalyzes the first and rate-limiting step of polyamine biosynthesis that converts ornithine into putrescine, which is the precursor for the polyamines, spermidine and spermine. Polyamines are essential for cell proliferation and are implicated in cellular processes, ranging from DNA replication to apoptosis. This Mus musculus (Mouse) protein is Ornithine decarboxylase (Odc1).